A 604-amino-acid chain; its full sequence is Putative O-acetyltransferase SAR0937 (604 aa).

The next 11 membrane-spanning stretches (helical) occupy residues 15-35 (YMPG…IYHL), 43-63 (GFLG…SLLL), 85-105 (LLPA…LLKS), 150-170 (AIEE…LLTI), 176-196 (IGFI…FIYS), 212-232 (LQTL…KLKN), 240-260 (YVID…FFII), 267-287 (IYDG…ASVV), 310-330 (YSLY…YVDG), 332-352 (IPVY…ELSY), and 377-397 (FIRM…LVGA). Residues Ser459, Asp581, and His584 contribute to the active site.

The protein belongs to the acyltransferase 3 family.

It is found in the cell membrane. The polypeptide is Putative O-acetyltransferase SAR0937 (Staphylococcus aureus (strain MRSA252)).